The sequence spans 231 residues: UPF0758 protein RBAM_025090 (231 aa).

Positions 109 to 231 (VIRSPEDGAK…FVSLKEKGYL (123 aa)) constitute an MPN domain. Zn(2+) is bound by residues His-180, His-182, and Asp-193. Residues 180–193 (HNHPSGDPTPSRED) carry the JAMM motif motif.

The protein belongs to the UPF0758 family.

The sequence is that of UPF0758 protein RBAM_025090 from Bacillus velezensis (strain DSM 23117 / BGSC 10A6 / LMG 26770 / FZB42) (Bacillus amyloliquefaciens subsp. plantarum).